We begin with the raw amino-acid sequence, 588 residues long: Phenol 2-monooxygenase fsqG (588 aa).

Residues 9–38 (DVLI…LIDW), 17–18 (PA), 37–39 (DWK), 45–50 (TGRADG), Y232, 289–299 (ARHNRIFLAGD), D299, and 309–313 (GQGMN) each bind FAD. 2 residues coordinate substrate: D49 and Y232.

It belongs to the PheA/TfdB FAD monooxygenase family. In terms of assembly, homodimer. FAD serves as cofactor.

It functions in the pathway secondary metabolite biosynthesis. Its function is as follows. Phenol 2-monooxygenase; part of the gene cluster that mediates the biosynthesis of the isoquinoline alkaloids fumisoquin A, fumisoquin B and fumisoquin C; as well as small amounts of fumipyrrole as a shunt metabolite. The products of the cluster lead to a brown coloration and are important for growth and conidiation. The nonribosomal peptide synthetase-like protein fsqF, which lacks a canonical condensation domain, is required for addition of a serine-derived dehydroalanine moiety to activated tyrosine but is not essential for the subsequent steps leading to isoquinoline formation. A different enzyme, most likely the ATP-grasp enzyme fsqD, is responsible for activation of tyrosine. Three additional enzymes encoded by the fsq cluster, the N-methyltransferase fsqC, the phenol 2-monooxygenase fsqG and the FAD-dependent oxidase fsqB, catalyze the formation of the isoquinoline ring system in the fumisoquins. FsqB converts the fspF thiolation domain-bound (2S,4S,5S)-2-amino-6-(3,4-dihydroxyphenyl)-4-hydroxy-5-(methylamino)hexanoyl into isoquinoline. The cyclization most likely proceeds via a two-step mechanism, beginning with FAD-dependent oxidation of the methyl group to an iminium species followed by electrophilic attack on the deprotonated phenol. The polypeptide is Phenol 2-monooxygenase fsqG (Aspergillus fumigatus (strain ATCC MYA-4609 / CBS 101355 / FGSC A1100 / Af293) (Neosartorya fumigata)).